The chain runs to 54 residues: Ductus ejaculatorius peptide 99B (54 aa).

Residues Met1–Ser21 form the signal peptide. Gln22 is modified (pyrrolidone carboxylic acid). An N-linked (GlcNAc...) asparagine glycan is attached at Asn25. Cys40 and Cys52 are disulfide-bonded. Residues Arg53–Lys54 constitute a propeptide that is removed on maturation.

To paragonial peptide B. As to expression, ductus ejaculatorius.

It localises to the secreted. In terms of biological role, induces post-mating responses; increased oviposition and reduced receptivity. The sequence is that of Ductus ejaculatorius peptide 99B (Dup99B) from Drosophila melanogaster (Fruit fly).